The following is a 262-amino-acid chain: Phosphatidylglycerol--prolipoprotein diacylglyceryl transferase (262 aa).

Helical transmembrane passes span F17–G37, L59–Y79, I94–W114, and T121–G141. Residue R142 coordinates a 1,2-diacyl-sn-glycero-3-phospho-(1'-sn-glycerol). 3 helical membrane-spanning segments follow: residues Q176–G196, V201–Y221, and L231–I251.

This sequence belongs to the Lgt family.

Its subcellular location is the cell inner membrane. The catalysed reaction is L-cysteinyl-[prolipoprotein] + a 1,2-diacyl-sn-glycero-3-phospho-(1'-sn-glycerol) = an S-1,2-diacyl-sn-glyceryl-L-cysteinyl-[prolipoprotein] + sn-glycerol 1-phosphate + H(+). It functions in the pathway protein modification; lipoprotein biosynthesis (diacylglyceryl transfer). Functionally, catalyzes the transfer of the diacylglyceryl group from phosphatidylglycerol to the sulfhydryl group of the N-terminal cysteine of a prolipoprotein, the first step in the formation of mature lipoproteins. The protein is Phosphatidylglycerol--prolipoprotein diacylglyceryl transferase of Polynucleobacter necessarius subsp. necessarius (strain STIR1).